Here is a 236-residue protein sequence, read N- to C-terminus: Large ribosomal subunit protein uL3 (236 aa).

The tract at residues 215 to 236 (PAPEPAAPVAAAAAGTGEEASA) is disordered. Over residues 221 to 236 (APVAAAAAGTGEEASA) the composition is skewed to low complexity.

Belongs to the universal ribosomal protein uL3 family. Part of the 50S ribosomal subunit. Forms a cluster with proteins L14 and L19.

Functionally, one of the primary rRNA binding proteins, it binds directly near the 3'-end of the 23S rRNA, where it nucleates assembly of the 50S subunit. The chain is Large ribosomal subunit protein uL3 from Parafrankia sp. (strain EAN1pec).